The following is a 148-amino-acid chain: uncharacterized protein (148 aa).

Residues 38–99 (QFRRHHHAEH…RRHLRKGHLK (62 aa)) are disordered. Positions 64–82 (FHHDGGRHGHATRIHENNR) are enriched in basic and acidic residues. A compositionally biased stretch (basic residues) spans 83 to 99 (RPHKRNRRRHLRKGHLK).

This is an uncharacterized protein from Fowl adenovirus A serotype 1 (strain CELO / Phelps) (FAdV-1).